Here is a 90-residue protein sequence, read N- to C-terminus: Early nodulin-36A (90 aa).

The chain is Early nodulin-36A from Glycine max (Soybean).